Here is a 369-residue protein sequence, read N- to C-terminus: Anhydro-N-acetylmuramic acid kinase (369 aa).

Residue 12 to 19 (GTSMDGVD) coordinates ATP.

Belongs to the anhydro-N-acetylmuramic acid kinase family.

The enzyme catalyses 1,6-anhydro-N-acetyl-beta-muramate + ATP + H2O = N-acetyl-D-muramate 6-phosphate + ADP + H(+). Its pathway is amino-sugar metabolism; 1,6-anhydro-N-acetylmuramate degradation. The protein operates within cell wall biogenesis; peptidoglycan recycling. In terms of biological role, catalyzes the specific phosphorylation of 1,6-anhydro-N-acetylmuramic acid (anhMurNAc) with the simultaneous cleavage of the 1,6-anhydro ring, generating MurNAc-6-P. Is required for the utilization of anhMurNAc either imported from the medium or derived from its own cell wall murein, and thus plays a role in cell wall recycling. This Shewanella sp. (strain MR-4) protein is Anhydro-N-acetylmuramic acid kinase.